Here is a 230-residue protein sequence, read N- to C-terminus: Probable cytokinin riboside 5'-monophosphate phosphoribohydrolase LOG4 (230 aa).

Substrate is bound by residues glutamate 91, 109–110 (RK), and 126–132 (GYGTIEE).

This sequence belongs to the LOG family.

The enzyme catalyses N(6)-(dimethylallyl)adenosine 5'-phosphate + H2O = N(6)-dimethylallyladenine + D-ribose 5-phosphate. The catalysed reaction is 9-ribosyl-trans-zeatin 5'-phosphate + H2O = trans-zeatin + D-ribose 5-phosphate. Its function is as follows. Cytokinin-activating enzyme working in the direct activation pathway. Phosphoribohydrolase that converts inactive cytokinin nucleotides to the biologically active free-base forms. In Oryza sativa subsp. japonica (Rice), this protein is Probable cytokinin riboside 5'-monophosphate phosphoribohydrolase LOG4 (LOGL4).